Consider the following 344-residue polypeptide: MSKRRLTQNQQRRIKSNHHKKIAKPELEWQDEMLGEVQQGIVVTRHAKHADVETEQGEIYRCNLRRTLKNVVVGDQVSWRKGNEQLQGISGVIEAIYPRKNELSRPDYYDGIKVMAANIDQIIIVSAVLPTLSLNIIDRYLVICETAKIPALIVLNKIDLLSESERQEVQKQLAIYENIGYETLCLSADTGENMEKLDRYLSRGTSIFVGQSGVGKSSLINQLLPEVNALTGAVSDISGLGQHTTTSSRLYHLPQGGNLIDSPGIREFGLWHLEPEQITLGYREFQSVLGTCKFRDCKHKSDPGCAVREAVEKGEINAIRFENYHRLIESRDETKSQRHFRTEE.

A CP-type G domain is found at 100-268; the sequence is KNELSRPDYY…LIDSPGIREF (169 aa). Residues 156–159 and 210–218 contribute to the GTP site; these read NKID and GQSGVGKSS. Zn(2+)-binding residues include Cys292, Cys297, His299, and Cys305.

Belongs to the TRAFAC class YlqF/YawG GTPase family. RsgA subfamily. Monomer. Associates with 30S ribosomal subunit, binds 16S rRNA. Requires Zn(2+) as cofactor.

It localises to the cytoplasm. In terms of biological role, one of several proteins that assist in the late maturation steps of the functional core of the 30S ribosomal subunit. Helps release RbfA from mature subunits. May play a role in the assembly of ribosomal proteins into the subunit. Circularly permuted GTPase that catalyzes slow GTP hydrolysis, GTPase activity is stimulated by the 30S ribosomal subunit. The protein is Small ribosomal subunit biogenesis GTPase RsgA of Actinobacillus pleuropneumoniae serotype 5b (strain L20).